Here is a 1347-residue protein sequence, read N- to C-terminus: Protocadherin-11 X-linked (1347 aa).

A signal peptide spans 1 to 23; sequence MDLLSGTYIFAVLLACVVFHSGA. The Extracellular portion of the chain corresponds to 24–812; it reads QEKNYTIREE…VSSPTNDYVK (789 aa). Cadherin domains lie at 26 to 139, 140 to 249, 250 to 355, 362 to 466, 467 to 570, 571 to 673, and 677 to 795; these read KNYT…APLF, PATV…HPVF, KETE…VPSI, NPVN…APVF, TQSF…SPVF, THNE…KPVF, and PSNY…APVT. N-linked (GlcNAc...) asparagine glycosylation is found at N27, N48, and N54. N344 carries N-linked (GlcNAc...) asparagine glycosylation. An N-linked (GlcNAc...) asparagine glycan is attached at N553. The N-linked (GlcNAc...) asparagine glycan is linked to N773. The helical transmembrane segment at 813-833 threads the bilayer; the sequence is ILVAAVAGTITVVVVIFITAV. Residues 834 to 1347 lie on the Cytoplasmic side of the membrane; it reads VRCRQAPHLK…DSPIMEEHPL (514 aa). Disordered stretches follow at residues 1057-1091, 1097-1116, and 1326-1347; these read LPEGSQESSSDGGLGDHDAGSLTSTSHGLPLGYPQ, RATPSNRTEGDGNSDPESTF, and FTPRQQARPSRGDSPIMEEHPL.

The protein resides in the cell membrane. Its function is as follows. Potential calcium-dependent cell-adhesion protein. This is Protocadherin-11 X-linked (PCDH11X) from Gorilla gorilla gorilla (Western lowland gorilla).